The sequence spans 2183 residues: DNA polymerase epsilon catalytic subunit A (2183 aa).

Zn(2+)-binding residues include C2066, C2069, C2090, and C2093. Residues 2066 to 2093 form a CysA-type zinc finger; it reads CFKCKNPCDLDLCKDSCCTKSGFRCPLC. Residues C2124, C2127, C2139, and C2141 each coordinate [4Fe-4S] cluster. The short motif at 2124 to 2141 is the CysB motif element; it reads CDKCRRVKEYELTEFCPC.

It belongs to the DNA polymerase type-B family. Heterotetramer. Consists of 4 subunits: POL2, DPB2, DPB3 and DPB4. [4Fe-4S] cluster is required as a cofactor.

It localises to the nucleus. The enzyme catalyses DNA(n) + a 2'-deoxyribonucleoside 5'-triphosphate = DNA(n+1) + diphosphate. Its function is as follows. DNA polymerase II participates in chromosomal DNA replication. In Yarrowia lipolytica (strain CLIB 122 / E 150) (Yeast), this protein is DNA polymerase epsilon catalytic subunit A (POL2).